A 1589-amino-acid chain; its full sequence is Centrosomal protein of 170 kDa protein B (1589 aa).

One can recognise an FHA domain in the interval 23-73; it reads IFVGREECELMLQSRSVDKQHAVINYDQDRDEHWVKDLGSLNGTFVNDMRI. 4 disordered regions span residues 130-261, 287-309, 325-388, and 409-583; these read RSEA…GAAP, ITKFSLRQRRPPGKEATPGEMVS, LLHR…RLQR, and FDED…EVEE. 2 stretches are compositionally biased toward basic and acidic residues: residues 147-156 and 243-253; these read RPEKGDRRPG and PAHEMPTKDAE. Residues 330–344 are compositionally biased toward basic and acidic residues; it reads GPGDDRHSTKSDLPV. Phosphoserine occurs at positions 360 and 421. Basic and acidic residues-rich tracts occupy residues 430–446 and 467–476; these read PKADKRRGPTPADRDRP and LKREKTEERL. Residues 478-489 show a composition bias toward low complexity; it reads SPSPASRTPARP. 2 positions are modified to phosphoserine: S480 and S492. Pro residues predominate over residues 520-530; the sequence is EKVPPVLPAPL. Position 536 is a phosphoserine (S536). Positions 538-548 are enriched in pro residues; the sequence is VGPPTPPPAPT. T542 bears the Phosphothreonine mark. S597, S619, S655, S711, S721, S746, S748, S751, S753, S772, S829, S853, S954, S972, S986, and S988 each carry phosphoserine. 4 disordered regions span residues 598–895, 934–1316, 1350–1374, and 1532–1552; these read PELS…LQDL, DAEC…PYGF, DGDTLGSSEPAHSASLSNMPSTPAS, and AQPGLGKGRVAAQSPPSPASA. Positions 711-722 are enriched in low complexity; that stretch reads SPAGPESSRRSG. Residues 957–972 show a composition bias toward polar residues; the sequence is DTASTVSLRSGKSGPS. Residues 1029–1038 show a composition bias toward basic residues; that stretch reads SAIRRGHRPR. Phosphoserine occurs at positions 1135, 1179, and 1199. The span at 1221 to 1230 shows a compositional bias: polar residues; the sequence is AANTATTTGP. A compositionally biased stretch (low complexity) spans 1286 to 1301; sequence PRAGSSSRARSRAPGP. T1304 is modified (phosphothreonine). Phosphoserine is present on residues S1356 and S1362. Over residues 1363–1374 the composition is skewed to polar residues; sequence ASLSNMPSTPAS. Low complexity predominate over residues 1542–1552; sequence AAQSPPSPASA. Phosphoserine is present on residues S1545 and S1548.

This sequence belongs to the CEP170 family.

The protein localises to the cytoplasm. The protein resides in the cytoskeleton. Its function is as follows. Plays a role in microtubule organization. This Homo sapiens (Human) protein is Centrosomal protein of 170 kDa protein B (CEP170B).